We begin with the raw amino-acid sequence, 132 residues long: Proline-rich protein sgp2 (132 aa).

Residues 1 to 20 (MKYCFVFFVTLICLIANCSA) form the signal peptide. Disordered stretches follow at residues 23–62 (EGDKGLSAAPTDGKQIERASDKTSEENDGNTNAQGDSNSR) and 87–132 (GASV…LGLP). The segment covering 36 to 47 (KQIERASDKTSE) has biased composition (basic and acidic residues). The segment covering 51 to 62 (GNTNAQGDSNSR) has biased composition (polar residues). Residues 91–105 (PQLPDLPTTPSLPDM) show a composition bias toward low complexity.

The protein resides in the secreted. In Glossina morsitans morsitans (Savannah tsetse fly), this protein is Proline-rich protein sgp2 (sgp2).